The chain runs to 142 residues: uncharacterized protein (142 aa).

Helical transmembrane passes span 12–29 (NAIL…YGLL) and 44–66 (IYGQ…GVTA).

It is found in the cell membrane. This is an uncharacterized protein from Archaeoglobus fulgidus (strain ATCC 49558 / DSM 4304 / JCM 9628 / NBRC 100126 / VC-16).